Here is a 141-residue protein sequence, read N- to C-terminus: Hemoglobin subunit alpha (141 aa).

The region spanning 1–141 (VLSSADKTNI…VSTVLTSKYR (141 aa)) is the Globin domain. Ser3 carries the phosphoserine modification. Lys7 bears the N6-succinyllysine mark. Thr8 is subject to Phosphothreonine. Lys11 carries the N6-succinyllysine modification. Lys16 is modified (N6-acetyllysine; alternate). Lys16 is modified (N6-succinyllysine; alternate). A Phosphotyrosine modification is found at Tyr24. Ser35 is subject to Phosphoserine. Lys40 carries the post-translational modification N6-succinyllysine. A Phosphoserine modification is found at Ser49. Residue His58 participates in O2 binding. Heme b is bound at residue His87. Ser102 is subject to Phosphoserine. Thr108 carries the post-translational modification Phosphothreonine. Phosphoserine occurs at positions 124 and 131. Residues Thr134 and Thr137 each carry the phosphothreonine modification. At Ser138 the chain carries Phosphoserine.

This sequence belongs to the globin family. In terms of assembly, heterotetramer of two alpha chains and two beta chains. Red blood cells.

In terms of biological role, involved in oxygen transport from the lung to the various peripheral tissues. Its function is as follows. Hemopressin acts as an antagonist peptide of the cannabinoid receptor CNR1. Hemopressin-binding efficiently blocks cannabinoid receptor CNR1 and subsequent signaling. In Rousettus aegyptiacus (Egyptian fruit bat), this protein is Hemoglobin subunit alpha (HBA).